Here is a 276-residue protein sequence, read N- to C-terminus: Release factor glutamine methyltransferase (276 aa).

S-adenosyl-L-methionine contacts are provided by residues 116–120 (GTGTG), D139, W167, and N182. Position 182–185 (182–185 (NPPY)) interacts with substrate.

This sequence belongs to the protein N5-glutamine methyltransferase family. PrmC subfamily.

The enzyme catalyses L-glutaminyl-[peptide chain release factor] + S-adenosyl-L-methionine = N(5)-methyl-L-glutaminyl-[peptide chain release factor] + S-adenosyl-L-homocysteine + H(+). In terms of biological role, methylates the class 1 translation termination release factors RF1/PrfA and RF2/PrfB on the glutamine residue of the universally conserved GGQ motif. The polypeptide is Release factor glutamine methyltransferase (Pseudomonas aeruginosa (strain ATCC 15692 / DSM 22644 / CIP 104116 / JCM 14847 / LMG 12228 / 1C / PRS 101 / PAO1)).